We begin with the raw amino-acid sequence, 245 residues long: tRNA pseudouridine synthase A (245 aa).

The active-site Nucleophile is the Asp52. Tyr111 contributes to the substrate binding site.

Belongs to the tRNA pseudouridine synthase TruA family. In terms of assembly, homodimer.

It carries out the reaction uridine(38/39/40) in tRNA = pseudouridine(38/39/40) in tRNA. Formation of pseudouridine at positions 38, 39 and 40 in the anticodon stem and loop of transfer RNAs. The chain is tRNA pseudouridine synthase A from Rickettsia rickettsii (strain Iowa).